The sequence spans 704 residues: UvrABC system protein B (704 aa).

One can recognise a Helicase ATP-binding domain in the interval 35-188 (ERINNGEKDV…DDLLRKFVSM (154 aa)). Position 48 to 55 (48 to 55 (GATGTGKS)) interacts with ATP. A Beta-hairpin motif is present at residues 101–124 (YYDYYQPEAYVAQTDTFIEKDSSI). In terms of domain architecture, Helicase C-terminal spans 438-604 (QIDDLLGEIR…PLRKKIADIT (167 aa)). The region spanning 659–694 (VGMIAQLTEQMHGAAAELQFEVAARIRDEVSELKKE) is the UVR domain.

It belongs to the UvrB family. Forms a heterotetramer with UvrA during the search for lesions. Interacts with UvrC in an incision complex.

The protein resides in the cytoplasm. Functionally, the UvrABC repair system catalyzes the recognition and processing of DNA lesions. A damage recognition complex composed of 2 UvrA and 2 UvrB subunits scans DNA for abnormalities. Upon binding of the UvrA(2)B(2) complex to a putative damaged site, the DNA wraps around one UvrB monomer. DNA wrap is dependent on ATP binding by UvrB and probably causes local melting of the DNA helix, facilitating insertion of UvrB beta-hairpin between the DNA strands. Then UvrB probes one DNA strand for the presence of a lesion. If a lesion is found the UvrA subunits dissociate and the UvrB-DNA preincision complex is formed. This complex is subsequently bound by UvrC and the second UvrB is released. If no lesion is found, the DNA wraps around the other UvrB subunit that will check the other stand for damage. The polypeptide is UvrABC system protein B (Pseudarthrobacter chlorophenolicus (strain ATCC 700700 / DSM 12829 / CIP 107037 / JCM 12360 / KCTC 9906 / NCIMB 13794 / A6) (Arthrobacter chlorophenolicus)).